Reading from the N-terminus, the 219-residue chain is Large ribosomal subunit protein bL25 (219 aa).

The segment at 176 to 219 (VTVVPPTDEPSEEEVEAMEGESATEEPEVVDEDKEDDEEENKED) is disordered. Residues 184 to 219 (EPSEEEVEAMEGESATEEPEVVDEDKEDDEEENKED) are compositionally biased toward acidic residues.

This sequence belongs to the bacterial ribosomal protein bL25 family. CTC subfamily. As to quaternary structure, part of the 50S ribosomal subunit; part of the 5S rRNA/L5/L18/L25 subcomplex. Contacts the 5S rRNA. Binds to the 5S rRNA independently of L5 and L18.

Functionally, this is one of the proteins that binds to the 5S RNA in the ribosome where it forms part of the central protuberance. The sequence is that of Large ribosomal subunit protein bL25 from Staphylococcus epidermidis (strain ATCC 12228 / FDA PCI 1200).